Consider the following 355-residue polypeptide: Peptide chain release factor 1 (355 aa).

Gln-231 is subject to N5-methylglutamine. Residues 280–291 (SERLAKESEARK) are compositionally biased toward basic and acidic residues. The segment at 280–303 (SERLAKESEARKSQVGSGDRSERI) is disordered.

This sequence belongs to the prokaryotic/mitochondrial release factor family. Methylated by PrmC. Methylation increases the termination efficiency of RF1.

The protein resides in the cytoplasm. Its function is as follows. Peptide chain release factor 1 directs the termination of translation in response to the peptide chain termination codons UAG and UAA. This is Peptide chain release factor 1 from Campylobacter jejuni subsp. jejuni serotype O:6 (strain 81116 / NCTC 11828).